The following is a 181-amino-acid chain: ATP-dependent protease subunit HslV (181 aa).

T2 is an active-site residue. 3 residues coordinate Na(+): G157, C160, and T163.

It belongs to the peptidase T1B family. HslV subfamily. In terms of assembly, a double ring-shaped homohexamer of HslV is capped on each side by a ring-shaped HslU homohexamer. The assembly of the HslU/HslV complex is dependent on binding of ATP.

The protein resides in the cytoplasm. It carries out the reaction ATP-dependent cleavage of peptide bonds with broad specificity.. Allosterically activated by HslU binding. Its function is as follows. Protease subunit of a proteasome-like degradation complex believed to be a general protein degrading machinery. The sequence is that of ATP-dependent protease subunit HslV from Hahella chejuensis (strain KCTC 2396).